The sequence spans 245 residues: Probable phosphatase YcdX (245 aa).

The Zn(2+) site is built by histidine 7, histidine 9, histidine 15, histidine 40, glutamate 73, histidine 101, histidine 131, aspartate 192, and histidine 194.

Belongs to the PHP family. In terms of assembly, homotrimer. It depends on Zn(2+) as a cofactor.

The sequence is that of Probable phosphatase YcdX from Escherichia coli O139:H28 (strain E24377A / ETEC).